Reading from the N-terminus, the 254-residue chain is Alcohol dehydrogenase (254 aa).

An NAD(+)-binding site is contributed by 10–33 (FVAGLGGIGLDTSREIVKSGPKNL). Position 138 (Ser-138) interacts with substrate. Tyr-151 (proton acceptor) is an active-site residue.

This sequence belongs to the short-chain dehydrogenases/reductases (SDR) family. As to quaternary structure, homodimer.

The enzyme catalyses a primary alcohol + NAD(+) = an aldehyde + NADH + H(+). It carries out the reaction a secondary alcohol + NAD(+) = a ketone + NADH + H(+). In Drosophila mimica (Fruit fly), this protein is Alcohol dehydrogenase (Adh).